Reading from the N-terminus, the 176-residue chain is Transcriptional repressor NrdR (176 aa).

A zinc finger spans residues 3–34; it reads CPYCGSLETQVKDSRPTDDASAIRRRRVCPDC. The ATP-cone domain occupies 49 to 139; sequence LTVLKKSGRR…VYRNFREARD (91 aa). The tract at residues 147–176 is disordered; sequence LDGAAQPEAPSKDDGGTDEPPAKTRAPTRA.

This sequence belongs to the NrdR family. Zn(2+) serves as cofactor.

Its function is as follows. Negatively regulates transcription of bacterial ribonucleotide reductase nrd genes and operons by binding to NrdR-boxes. In Methylocella silvestris (strain DSM 15510 / CIP 108128 / LMG 27833 / NCIMB 13906 / BL2), this protein is Transcriptional repressor NrdR.